The primary structure comprises 28 residues: Short cationic peptide-1b (28 aa).

A Glutamic acid 1-amide modification is found at Glu28.

Expressed by the venom gland.

Its subcellular location is the secreted. This is Short cationic peptide-1b from Cupiennius salei (American wandering spider).